We begin with the raw amino-acid sequence, 62 residues long: Large ribosomal subunit protein eL24 (62 aa).

Zn(2+)-binding residues include Cys-7, Cys-10, Cys-33, and Cys-37. The C4-type zinc-finger motif lies at 7 to 37; it reads CSFCGKDILPGTGLMYVRNDGSLLWFCSSKC.

The protein belongs to the eukaryotic ribosomal protein eL24 family. As to quaternary structure, part of the 50S ribosomal subunit. Forms a cluster with proteins L3 and L14. Zn(2+) serves as cofactor.

Its function is as follows. Binds to the 23S rRNA. In Sulfolobus acidocaldarius (strain ATCC 33909 / DSM 639 / JCM 8929 / NBRC 15157 / NCIMB 11770), this protein is Large ribosomal subunit protein eL24.